A 128-amino-acid polypeptide reads, in one-letter code: Small ribosomal subunit protein uS9 (128 aa).

The interval 106–128 (PRVVERKKPGRPKARKRFQFSKR) is disordered. The span at 113–128 (KPGRPKARKRFQFSKR) shows a compositional bias: basic residues.

This sequence belongs to the universal ribosomal protein uS9 family.

This is Small ribosomal subunit protein uS9 from Porphyromonas gingivalis (strain ATCC 33277 / DSM 20709 / CIP 103683 / JCM 12257 / NCTC 11834 / 2561).